Consider the following 415-residue polypeptide: 3-isopropylmalate dehydratase large subunit (415 aa).

[4Fe-4S] cluster contacts are provided by Cys-295, Cys-353, and Cys-356.

It belongs to the aconitase/IPM isomerase family. LeuC type 2 subfamily. In terms of assembly, heterodimer of LeuC and LeuD. It depends on [4Fe-4S] cluster as a cofactor.

The catalysed reaction is (2R,3S)-3-isopropylmalate = (2S)-2-isopropylmalate. Its pathway is amino-acid biosynthesis; L-leucine biosynthesis; L-leucine from 3-methyl-2-oxobutanoate: step 2/4. Catalyzes the isomerization between 2-isopropylmalate and 3-isopropylmalate, via the formation of 2-isopropylmaleate. The polypeptide is 3-isopropylmalate dehydratase large subunit (Pyrobaculum neutrophilum (strain DSM 2338 / JCM 9278 / NBRC 100436 / V24Sta) (Thermoproteus neutrophilus)).